Consider the following 516-residue polypeptide: Maturase K (516 aa).

The protein belongs to the intron maturase 2 family. MatK subfamily.

It localises to the plastid. Its subcellular location is the chloroplast. In terms of biological role, usually encoded in the trnK tRNA gene intron. Probably assists in splicing its own and other chloroplast group II introns. The protein is Maturase K of Chara connivens (Convergent stonewort).